A 506-amino-acid chain; its full sequence is MDLLLLEKTLIGLFFAIIIAIVVSKLRSKKFKLPPGPIPVPVFGNWLQVGDDLNHRNLTEYAKKFGDLFLLRMGQRNLVVVSSPELAKEVLHTQGVEFGSRTRNVVFDIFTGKGQDMVFTVYGEHWRKMRRIMTVPFFTNKVVQQYRGGWEDEVAHVIDDVKKMPESATNGIVLRKRLQLMMYNNMYRIMFDRRFESEDDPLFNKLKALNGERSRLAQSFEYNYGDFIPILRPFLRGYLKICKEVKQRRLQLFKDYFVDERKKLSTTTKSMDNNALKCAIDHILEAEQKGEINEDNVLYIVENINVAAIETTLWSIEWGIAELVNHPEIQKKLRDEIDSVLGPGVQITEPHTHKLPYLQAVIKETLRLRMAIPLLVPHMNLHDAKLAGYDIPAESKILVNAWWLANNPATWKRPEEFRPERFFEEEKHVEANGNDFRYLPFGVGRRSCPGIILALPILGITLGRLVQNFELLPPPGQSKLDTTEKGGQFSLHILKHFTIVMKPRSF.

2 consecutive short sequence motifs (nuclear localization signal) follow at residues 161–168 (VKKMPESA) and 247–254 (QRRLQLFK). Heme is bound at residue cysteine 448.

Belongs to the cytochrome P450 family. Heme serves as cofactor.

The protein resides in the nucleus. The catalysed reaction is (E)-cinnamate + reduced [NADPH--hemoprotein reductase] + O2 = (E)-4-coumarate + oxidized [NADPH--hemoprotein reductase] + H2O + H(+). Its pathway is phenylpropanoid metabolism; trans-4-coumarate biosynthesis; trans-4-coumarate from trans-cinnamate: step 1/1. In terms of biological role, component of the floral volatile benzenoid/phenylpropanoid (FVBP) biosynthetic pathway that controls carbon flux to pigments essential for pollination or UV protection, to numerous pytoalexins synthesized by plants when challenged by pathogens, and to lignins. In Petunia hybrida (Petunia), this protein is Trans-cinnamate 4-monooxygenase C4H1.